Reading from the N-terminus, the 301-residue chain is Probable 5-dehydro-4-deoxyglucarate dehydratase (301 aa).

Belongs to the DapA family.

The catalysed reaction is 5-dehydro-4-deoxy-D-glucarate + H(+) = 2,5-dioxopentanoate + CO2 + H2O. The protein operates within carbohydrate acid metabolism; D-glucarate degradation; 2,5-dioxopentanoate from D-glucarate: step 2/2. The chain is Probable 5-dehydro-4-deoxyglucarate dehydratase from Xanthobacter autotrophicus (strain ATCC BAA-1158 / Py2).